Reading from the N-terminus, the 354-residue chain is Galectin-9 (354 aa).

2 Galectin domains span residues 17–147 and 226–354; these read FTGI…INFQ and FFTS…HVQT. Residues N47, H60, R64, N74, 81-87, H266, R270, T280, and 286-292 contribute to the a beta-D-galactoside site; these read WGPEERK and WGPEERS.

The isoform Long is expressed exclusively in the small intestine.

It localises to the cytoplasm. The protein resides in the nucleus. It is found in the secreted. Its function is as follows. Binds galactosides. Has high affinity for the Forssman pentasaccharide. Ligand for HAVCR2/TIM3. Binding to HAVCR2 induces T-helper type 1 lymphocyte (Th1) death. Also stimulates bactericidal activity in infected macrophages by causing macrophage activation and IL1B secretion which restricts intracellular bacterial growth. Ligand for P4HB; the interaction retains P4HB at the cell surface of Th2 T helper cells, increasing disulfide reductase activity at the plasma membrane, altering the plasma membrane redox state and enhancing cell migration. Ligand for CD44; the interaction enhances binding of SMAD3 to the FOXP3 promoter, leading to up-regulation of FOXP3 expression and increased induced regulatory T (iTreg) cell stability and suppressive function. Promotes ability of mesenchymal stromal cells to suppress T-cell proliferation. Expands regulatory T-cells and induces cytotoxic T-cell apoptosis following virus infection. Activates ERK1/2 phosphorylation inducing cytokine (IL-6, IL-8, IL-12) and chemokine (CCL2) production in mast and dendritic cells. Inhibits degranulation and induces apoptosis of mast cells. Induces maturation and migration of dendritic cells. Inhibits natural killer (NK) cell function. Can transform NK cell phenotype from peripheral to decidual during pregnancy. Astrocyte derived galectin-9 enhances microglial TNF production. May play a role in thymocyte-epithelial interactions relevant to the biology of the thymus. May provide the molecular basis for urate flux across cell membranes, allowing urate that is formed during purine metabolism to efflux from cells and serving as an electrogenic transporter that plays an important role in renal and gastrointestinal urate excretion. Highly selective to the anion urate. The sequence is that of Galectin-9 (Lgals9) from Rattus norvegicus (Rat).